The chain runs to 252 residues: Large ribosomal subunit protein uL4 (252 aa).

It belongs to the universal ribosomal protein uL4 family. As to quaternary structure, part of the 50S ribosomal subunit.

Functionally, one of the primary rRNA binding proteins, this protein initially binds near the 5'-end of the 23S rRNA. It is important during the early stages of 50S assembly. It makes multiple contacts with different domains of the 23S rRNA in the assembled 50S subunit and ribosome. Its function is as follows. Forms part of the polypeptide exit tunnel. The sequence is that of Large ribosomal subunit protein uL4 from Methanococcus maripaludis (strain C6 / ATCC BAA-1332).